Here is a 601-residue protein sequence, read N- to C-terminus: Glutathione-regulated potassium-efflux system protein KefB (601 aa).

Helical transmembrane passes span 4-24, 29-49, 55-75, 87-107, 115-135, 152-172, 177-197, 207-227, 230-250, 268-288, 291-311, 324-344, and 356-376; these read SDFLLAGVLFLFAAVAAVPLA, IGAVLGYLLAGIAIGPWGLGF, EILHFSELGVVFLMFIIGLEL, IFGVGAAQVLLSAALLAGLLM, AAVVGGIGLAMSSTAMALQLM, VLLFQDLAVIPALALVPLLAG, HFDWMKIGIKVLAFVGMLIGG, FIAASGVREVFTAATLLLVLG, LFMDALGLSMALGTFIAGVLL, GLLLGLFFISVGMSLNLGVLY, LLWVVISVVVLVAVKILVLYL, MQFAGVLSQGGEFAFVLFSTA, and ALLLVTVTLSMMTTPLLMKLV. The 120-residue stretch at 400 to 519 folds into the RCK N-terminal domain; the sequence is KPQVIVVGFG…AGVTQFSRET (120 aa).

It belongs to the monovalent cation:proton antiporter 2 (CPA2) transporter (TC 2.A.37) family. KefB subfamily. In terms of assembly, interacts with the regulatory subunit KefG.

Its subcellular location is the cell inner membrane. In terms of biological role, pore-forming subunit of a potassium efflux system that confers protection against electrophiles. Catalyzes K(+)/H(+) antiport. This chain is Glutathione-regulated potassium-efflux system protein KefB, found in Escherichia coli (strain ATCC 8739 / DSM 1576 / NBRC 3972 / NCIMB 8545 / WDCM 00012 / Crooks).